Reading from the N-terminus, the 904-residue chain is NADH-quinone oxidoreductase subunit G (904 aa).

Positions 1 to 83 (MATIHVDGKA…GTWISIDDEE (83 aa)) constitute a 2Fe-2S ferredoxin-type domain. Residues Cys-34, Cys-45, Cys-48, and Cys-67 each contribute to the [2Fe-2S] cluster site. Residues 83-122 (ESKAFRASVVEWLMTNHPHDCPVCEEGGHCHLQDMTVMTG) form the 4Fe-4S His(Cys)3-ligated-type domain. Residues His-99, Cys-103, Cys-106, Cys-112, Cys-151, Cys-154, Cys-157, Cys-201, Cys-228, Cys-231, Cys-235, and Cys-263 each coordinate [4Fe-4S] cluster. In terms of domain architecture, 4Fe-4S Mo/W bis-MGD-type spans 221–277 (MQFAPSICHGCSSGCNISPGERYGELRRIENRFNGSVNQYFLCDRGRFGYGYVNRKD).

Belongs to the complex I 75 kDa subunit family. In terms of assembly, composed of 13 different subunits. Subunits NuoCD, E, F, and G constitute the peripheral sector of the complex. The cofactor is [2Fe-2S] cluster. It depends on [4Fe-4S] cluster as a cofactor.

The enzyme catalyses a quinone + NADH + 5 H(+)(in) = a quinol + NAD(+) + 4 H(+)(out). Its function is as follows. NDH-1 shuttles electrons from NADH, via FMN and iron-sulfur (Fe-S) centers, to quinones in the respiratory chain. The immediate electron acceptor for the enzyme in this species is believed to be ubiquinone. Couples the redox reaction to proton translocation (for every two electrons transferred, four hydrogen ions are translocated across the cytoplasmic membrane), and thus conserves the redox energy in a proton gradient. The protein is NADH-quinone oxidoreductase subunit G (nuoG) of Pseudomonas putida (strain ATCC 47054 / DSM 6125 / CFBP 8728 / NCIMB 11950 / KT2440).